Consider the following 150-residue polypeptide: Large ribosomal subunit protein bL9 (150 aa).

This sequence belongs to the bacterial ribosomal protein bL9 family.

Its function is as follows. Binds to the 23S rRNA. The sequence is that of Large ribosomal subunit protein bL9 from Shewanella halifaxensis (strain HAW-EB4).